The primary structure comprises 387 residues: Protein RecA, chromosomal (387 aa).

Gly80–Thr87 is a binding site for ATP. Positions Glu352–Asp387 are disordered. The segment covering Thr378–Asp387 has biased composition (acidic residues).

The protein belongs to the RecA family.

Its subcellular location is the cytoplasm. In terms of biological role, can catalyze the hydrolysis of ATP in the presence of single-stranded DNA, the ATP-dependent uptake of single-stranded DNA by duplex DNA, and the ATP-dependent hybridization of homologous single-stranded DNAs. It interacts with LexA causing its activation and leading to its autocatalytic cleavage. The chain is Protein RecA, chromosomal from Lactococcus lactis subsp. lactis (strain IL1403) (Streptococcus lactis).